Consider the following 164-residue polypeptide: MSLSKLKAPKGANRERTRVGRGQGSGLGKTAGRGGKGQKARSGNMHFEGFEGGQMPLQRRLPKFGFKNVFRREFEEVKVGDLDGLSGVVDPAALKGAGLVRGNRDGVVVLGGGELKSAVTVKVHRVTAGARAAIEKAGGTVELIPAPVTMYEKAKAARKAQAKK.

Residues 1–52 form a disordered region; it reads MSLSKLKAPKGANRERTRVGRGQGSGLGKTAGRGGKGQKARSGNMHFEGFEG. The span at 21 to 37 shows a compositional bias: gly residues; it reads RGQGSGLGKTAGRGGKG.

This sequence belongs to the universal ribosomal protein uL15 family. In terms of assembly, part of the 50S ribosomal subunit.

In terms of biological role, binds to the 23S rRNA. The sequence is that of Large ribosomal subunit protein uL15 from Anaeromyxobacter sp. (strain Fw109-5).